The sequence spans 350 residues: Biotin synthase (350 aa).

The 225-residue stretch at Arg38–Ser262 folds into the Radical SAM core domain. Residues Cys53, Cys57, and Cys60 each contribute to the [4Fe-4S] cluster site. [2Fe-2S] cluster contacts are provided by Cys97, Cys128, Cys188, and Arg260.

Belongs to the radical SAM superfamily. Biotin synthase family. As to quaternary structure, homodimer. The cofactor is [4Fe-4S] cluster. [2Fe-2S] cluster serves as cofactor.

It carries out the reaction (4R,5S)-dethiobiotin + (sulfur carrier)-SH + 2 reduced [2Fe-2S]-[ferredoxin] + 2 S-adenosyl-L-methionine = (sulfur carrier)-H + biotin + 2 5'-deoxyadenosine + 2 L-methionine + 2 oxidized [2Fe-2S]-[ferredoxin]. Its pathway is cofactor biosynthesis; biotin biosynthesis; biotin from 7,8-diaminononanoate: step 2/2. Catalyzes the conversion of dethiobiotin (DTB) to biotin by the insertion of a sulfur atom into dethiobiotin via a radical-based mechanism. This is Biotin synthase from Yersinia enterocolitica serotype O:8 / biotype 1B (strain NCTC 13174 / 8081).